Here is a 588-residue protein sequence, read N- to C-terminus: DNA ligase (588 aa).

Glutamate 250 lines the ATP pocket. Lysine 252 (N6-AMP-lysine intermediate) is an active-site residue. Residues arginine 257, arginine 272, glutamate 302, phenylalanine 342, arginine 417, and lysine 423 each contribute to the ATP site.

This sequence belongs to the ATP-dependent DNA ligase family. It depends on Mg(2+) as a cofactor.

It carries out the reaction ATP + (deoxyribonucleotide)n-3'-hydroxyl + 5'-phospho-(deoxyribonucleotide)m = (deoxyribonucleotide)n+m + AMP + diphosphate.. In terms of biological role, DNA ligase that seals nicks in double-stranded DNA during DNA replication, DNA recombination and DNA repair. The sequence is that of DNA ligase from Nitrosopumilus maritimus (strain SCM1).